Consider the following 518-residue polypeptide: Na(+)/H(+) exchange regulatory cofactor NHE-RF3 (518 aa).

Residues E9 to N90 form the PDZ 1 domain. S108, S148, S192, S250, S334, and S348 each carry phosphoserine. 2 consecutive PDZ domains span residues L135–E215 and I243–E323. The 81-residue stretch at L378–K458 folds into the PDZ 4 domain. At T451 the chain carries Phosphothreonine. Residues K499 to L518 are disordered. 5 positions are modified to phosphoserine: S507, S509, S510, S511, and S513. The span at S507–L518 shows a compositional bias: low complexity.

The protein belongs to the NHER family. Interacts with PDZK1IP1 and ABCC2. Interacts (via PDZ domains 1 and 3) with SCARB1 (C-terminal domain). Forms a heterodimeric complex with NHERF1. Interacts with AKAP2, BCR, CFTR, SLCO1A1, SLC22A12, SLC22A4, SLC22A5, NHERF2 and SLC17A1. Component of a complex, composed of PDZK1, SYNGAP1, KLHL17 and NMDA receptors. Interacts (via PDZ1 domain) directly with KLHL17; the interaction is important for integrity of actin cytoskeleton structures in neurons. Interacts (via C-terminal PDZ domain) with SLC9A3 (via C-terminal domain). Interacts (via the first PDZ domain) with PTGIR (via non-isoprenylated C-terminus). Binds to the C-terminal region of SLC26A3. Interacts (via C-terminal PDZ domain) with SLC26A6 (via C-terminal domain). Interacts (via PDZ domains 1 and 3) with SLC5A8 (via PDZ-binding motif); interaction increases nicotinate transport activity of SLC5A8. Highly expressed in the brush border membrane of duodenal and ileal mucosa.

The protein localises to the membrane. Its subcellular location is the cell membrane. Its function is as follows. A scaffold protein that connects plasma membrane proteins and regulatory components, regulating their surface expression in epithelial cells apical domains. May be involved in the coordination of a diverse range of regulatory processes for ion transport and second messenger cascades. In complex with NHERF1, may cluster proteins that are functionally dependent in a mutual fashion and modulate the trafficking and the activity of the associated membrane proteins. May play a role in the cellular mechanisms associated with multidrug resistance through its interaction with ABCC2 and PDZK1IP1. May potentiate the CFTR chloride channel activity. Required for normal cell-surface expression of SCARB1. Plays a role in maintaining normal plasma cholesterol levels via its effects on SCARB1. Plays a role in the normal localization and function of the chloride-anion exchanger SLC26A6 to the plasma membrane in the brush border of the proximal tubule of the kidney. May be involved in the regulation of proximal tubular Na(+)-dependent inorganic phosphate cotransport therefore playing an important role in tubule function. This chain is Na(+)/H(+) exchange regulatory cofactor NHE-RF3 (PDZK1), found in Oryctolagus cuniculus (Rabbit).